A 301-amino-acid chain; its full sequence is uncharacterized protein (301 aa).

Residues Ser-44 and Tyr-107 each act as charge relay system in the active site. The active-site Proton donor is the Tyr-133. The active-site Schiff-base intermediate with substrate is the Lys-162.

The protein belongs to the DapA family. As to quaternary structure, homotetramer.

Its subcellular location is the cytoplasm. This is an uncharacterized protein from Pyrobaculum arsenaticum (strain DSM 13514 / JCM 11321 / PZ6).